Here is a 151-residue protein sequence, read N- to C-terminus: uncharacterized protein (151 aa).

The 138-residue stretch at 6–143 folds into the Nudix hydrolase domain; sequence MKTLSAGIIF…QWQYVMGPSL (138 aa).

This is an uncharacterized protein from Escherichia coli (Bacteriophage T4).